Reading from the N-terminus, the 110-residue chain is Insulin (110 aa).

The signal sequence occupies residues 1–24 (MALWMRLLPLLALLALWGPDPAQA). 3 disulfide bridges follow: Cys-31-Cys-96, Cys-43-Cys-109, and Cys-95-Cys-100. Positions 57–87 (EAEDLQVGQVELGGGPGAGSLQPLALEGSLQ) are cleaved as a propeptide — c peptide.

It belongs to the insulin family. As to quaternary structure, heterodimer of a B chain and an A chain linked by two disulfide bonds.

The protein resides in the secreted. Insulin decreases blood glucose concentration. It increases cell permeability to monosaccharides, amino acids and fatty acids. It accelerates glycolysis, the pentose phosphate cycle, and glycogen synthesis in liver. The polypeptide is Insulin (INS) (Pongo pygmaeus (Bornean orangutan)).